Reading from the N-terminus, the 1007-residue chain is Probable beta-galactosidase A (1007 aa).

A signal peptide spans 1–18 (MRLLPVWTAALLAAQAAG). Tyr96, Asn140, Ala141, and Glu142 together coordinate substrate. N-linked (GlcNAc...) asparagine glycosylation occurs at Asn156. Asn199 contributes to the substrate binding site. Residue Glu200 is the Proton donor of the active site. Cys205 and Cys206 are joined by a disulfide. A substrate-binding site is contributed by Tyr260. Cys266 and Cys315 form a disulfide bridge. Glu298 (nucleophile) is an active-site residue. Tyr364 provides a ligand contact to substrate. N-linked (GlcNAc...) asparagine glycans are attached at residues Asn405, Asn422, Asn621, Asn740, Asn775, and Asn914.

This sequence belongs to the glycosyl hydrolase 35 family.

Its subcellular location is the secreted. It catalyses the reaction Hydrolysis of terminal non-reducing beta-D-galactose residues in beta-D-galactosides.. Cleaves beta-linked terminal galactosyl residues from gangliosides, glycoproteins, and glycosaminoglycans. In Emericella nidulans (strain FGSC A4 / ATCC 38163 / CBS 112.46 / NRRL 194 / M139) (Aspergillus nidulans), this protein is Probable beta-galactosidase A (lacA).